Reading from the N-terminus, the 219-residue chain is MSKNNSKSTQGAPLDYIPGITTINQPVFMDDSVLTMNPTMNVPTTNTLISPIPVTTSKSSQLDSAHPTVVHIGDNHPEPKNESKTQPKIESKKEPTLKQEEQTIQAEEEAQKIAKEETRESFLRYGGEIIIDIMLGILLGIAVNMLTDYIASIFGLKGTAKFPIQLVLIVIVLYMLRINPDISFPLRSRTDTYGVIFIPIFITAQRNFAIFFSELYNIF.

The tract at residues 70–102 is disordered; that stretch reads VHIGDNHPEPKNESKTQPKIESKKEPTLKQEEQ. The segment covering 73-101 has biased composition (basic and acidic residues); that stretch reads GDNHPEPKNESKTQPKIESKKEPTLKQEE. A coiled-coil region spans residues 96 to 120; the sequence is TLKQEEQTIQAEEEAQKIAKEETRE. 3 helical membrane-spanning segments follow: residues 126–146, 153–173, and 192–212; these read GGEIIIDIMLGILLGIAVNML, IFGLKGTAKFPIQLVLIVIVL, and TYGVIFIPIFITAQRNFAIFF.

The protein localises to the membrane. This is an uncharacterized protein from Acanthamoeba polyphaga mimivirus (APMV).